The following is a 240-amino-acid chain: Uridylate kinase (240 aa).

13–16 (KFSG) contributes to the ATP binding site. Gly55 is a UMP binding site. Gly56 and Arg60 together coordinate ATP. UMP is bound by residues Asp76 and 137 to 144 (TGNPFFTT). The ATP site is built by Thr164, Tyr170, and Asp173.

The protein belongs to the UMP kinase family. As to quaternary structure, homohexamer.

The protein resides in the cytoplasm. The enzyme catalyses UMP + ATP = UDP + ADP. Its pathway is pyrimidine metabolism; CTP biosynthesis via de novo pathway; UDP from UMP (UMPK route): step 1/1. Inhibited by UTP. Functionally, catalyzes the reversible phosphorylation of UMP to UDP. This is Uridylate kinase from Helicobacter pylori (strain ATCC 700392 / 26695) (Campylobacter pylori).